We begin with the raw amino-acid sequence, 531 residues long: 4-hydroxyphenylacetaldehyde oxime monooxygenase (531 aa).

Residues 18–38 form a helical membrane-spanning segment; it reads WQTCLLVLLPVLLVSYYLLTS. Heme b is bound by residues Arg122, Arg151, Arg466, and Cys468.

It belongs to the cytochrome P450 family. The cofactor is heme b.

It is found in the endoplasmic reticulum membrane. It catalyses the reaction (E)-4-hydroxyphenylacetaldehyde oxime + reduced [NADPH--hemoprotein reductase] + O2 = (S)-4-hydroxymandelonitrile + oxidized [NADPH--hemoprotein reductase] + 2 H2O + H(+). The catalysed reaction is (E)-4-hydroxyphenylacetaldehyde oxime = (Z)-(4-hydroxyphenyl)acetaldehyde oxime. It carries out the reaction (Z)-(4-hydroxyphenyl)acetaldehyde oxime = 4-hydroxyphenylacetonitrile + H2O. The enzyme catalyses 4-hydroxyphenylacetonitrile + reduced [NADPH--hemoprotein reductase] + O2 = (S)-4-hydroxymandelonitrile + oxidized [NADPH--hemoprotein reductase] + H2O + H(+). Its pathway is secondary metabolite biosynthesis; dhurrin biosynthesis; dhurrin from L-tyrosine: step 2/3. Cytochrome P450 involved in the biosynthesis of the cyanogenic glucoside dhurrin. Catalyzes the conversion of p-hydroxyphenylacetaldoxime to p-hydroxymandelonitrile via three different and successive activities: isomerization of the (E) isomer to the (Z) isomer of p-hydroxyphenylacetaldoxime, followed by dehydration of the oxime to the corresponding nitrile, and C-hydroxylation of the nitrile to produce p-hydroxymandelonitrile. The polypeptide is 4-hydroxyphenylacetaldehyde oxime monooxygenase (Sorghum bicolor (Sorghum)).